We begin with the raw amino-acid sequence, 268 residues long: MENQFLAFPQFDPIIFSLGPISLRWYGLMYLIGFIFARWLAVKRANRPDSGWTVEQVDNLLFNGFAGVFLGGRIGYVLFYQWDLFVQEPSYLFRVWEGGMSFHGGLIGVIVAMLVTAKLQKRNFWVVADFVAPLIPFGLGMGRIGNFINDELWGRVTDVPWAVLFPSGGYLPRHPSQLYEFVLEGIVLFCILNWFIRKPRPAGSVAGLFLLFYGLFRFIVEFFREPDAQLGLYFGQQISMGQILSTPMILLGALFIVLAYRRRSAVKN.

7 helical membrane-spanning segments follow: residues 14 to 34 (IIFSLGPISLRWYGLMYLIGF), 60 to 80 (LLFNGFAGVFLGGRIGYVLFY), 95 to 115 (VWEGGMSFHGGLIGVIVAMLV), 124 to 144 (FWVVADFVAPLIPFGLGMGRI), 176 to 196 (SQLYEFVLEGIVLFCILNWFI), 203 to 223 (GSVAGLFLLFYGLFRFIVEFF), and 238 to 258 (ISMGQILSTPMILLGALFIVL). Arg-143 serves as a coordination point for a 1,2-diacyl-sn-glycero-3-phospho-(1'-sn-glycerol).

Belongs to the Lgt family.

The protein localises to the cell inner membrane. It catalyses the reaction L-cysteinyl-[prolipoprotein] + a 1,2-diacyl-sn-glycero-3-phospho-(1'-sn-glycerol) = an S-1,2-diacyl-sn-glyceryl-L-cysteinyl-[prolipoprotein] + sn-glycerol 1-phosphate + H(+). It participates in protein modification; lipoprotein biosynthesis (diacylglyceryl transfer). In terms of biological role, catalyzes the transfer of the diacylglyceryl group from phosphatidylglycerol to the sulfhydryl group of the N-terminal cysteine of a prolipoprotein, the first step in the formation of mature lipoproteins. This chain is Phosphatidylglycerol--prolipoprotein diacylglyceryl transferase, found in Mannheimia succiniciproducens (strain KCTC 0769BP / MBEL55E).